Consider the following 202-residue polypeptide: Protein DEHYDRATION-INDUCED 19 homolog 5 (202 aa).

The span at 88 to 97 (SHLLKRRKPS) shows a compositional bias: basic residues. Positions 88 to 120 (SHLLKRRKPSRPSSSWPTPSNNSDPYFEGPPQY) are disordered. The span at 98–112 (RPSSSWPTPSNNSDP) shows a compositional bias: low complexity.

It belongs to the Di19 family.

The polypeptide is Protein DEHYDRATION-INDUCED 19 homolog 5 (DI19-5) (Oryza sativa subsp. japonica (Rice)).